We begin with the raw amino-acid sequence, 400 residues long: uncharacterized protein (400 aa).

The signal sequence occupies residues Met-1 to Ala-23.

This is an uncharacterized protein from Archaeoglobus fulgidus (strain ATCC 49558 / DSM 4304 / JCM 9628 / NBRC 100126 / VC-16).